The primary structure comprises 463 residues: A-type ATP synthase subunit B (463 aa).

Belongs to the ATPase alpha/beta chains family. In terms of assembly, has multiple subunits with at least A(3), B(3), C, D, E, F, H, I and proteolipid K(x).

It is found in the cell membrane. Component of the A-type ATP synthase that produces ATP from ADP in the presence of a proton gradient across the membrane. The B chain is a regulatory subunit. The polypeptide is A-type ATP synthase subunit B (Aeropyrum pernix (strain ATCC 700893 / DSM 11879 / JCM 9820 / NBRC 100138 / K1)).